An 87-amino-acid chain; its full sequence is Large ribosomal subunit protein bL31B (87 aa).

This sequence belongs to the bacterial ribosomal protein bL31 family. Type B subfamily. As to quaternary structure, part of the 50S ribosomal subunit.

This chain is Large ribosomal subunit protein bL31B, found in Pseudomonas aeruginosa (strain LESB58).